The primary structure comprises 129 residues: NADPH-dependent 7-cyano-7-deazaguanine reductase (129 aa).

Cysteine 43 serves as the catalytic Thioimide intermediate. The Proton donor role is filled by aspartate 50. Substrate contacts are provided by residues 65 to 67 (VEL) and 84 to 85 (HE).

It belongs to the GTP cyclohydrolase I family. QueF type 1 subfamily.

The protein localises to the cytoplasm. The catalysed reaction is 7-aminomethyl-7-carbaguanine + 2 NADP(+) = 7-cyano-7-deazaguanine + 2 NADPH + 3 H(+). It functions in the pathway tRNA modification; tRNA-queuosine biosynthesis. Functionally, catalyzes the NADPH-dependent reduction of 7-cyano-7-deazaguanine (preQ0) to 7-aminomethyl-7-deazaguanine (preQ1). The sequence is that of NADPH-dependent 7-cyano-7-deazaguanine reductase from Aquifex aeolicus (strain VF5).